Reading from the N-terminus, the 635-residue chain is Very-long-chain aldehyde decarbonylase GL1-6 (635 aa).

4 helical membrane passes run 46 to 66 (LLNF…QLWI), 100 to 120 (IILT…AQVA), 127 to 147 (GMVV…YWLH), and 183 to 203 (VVYF…GTVS). The 135-residue stretch at 139–273 (VEFLYYWLHR…MPVYDYIYGT (135 aa)) folds into the Fatty acid hydroxylase domain.

This sequence belongs to the sterol desaturase family. As to quaternary structure, homodimer. Expressed in germinating seeds and shoots.

It is found in the endoplasmic reticulum membrane. The catalysed reaction is a long-chain fatty aldehyde + 2 NADPH + O2 + H(+) = a long-chain alkane + formate + 2 NADP(+) + H2O. In terms of biological role, aldehyde decarbonylase involved in the conversion of aldehydes to alkanes. Core component of a very-long-chain alkane synthesis complex. In Oryza sativa subsp. japonica (Rice), this protein is Very-long-chain aldehyde decarbonylase GL1-6.